A 327-amino-acid polypeptide reads, in one-letter code: dTDP-4-dehydrorhamnose reductase (327 aa).

The tract at residues 1–22 (MDLINGMGTSPGYWRTPREPGN) is disordered. NADH is bound by residues 43–45 (GMV), 69–70 (DI), and 91–93 (AYT). NADPH is bound by residues 44 to 45 (MV), 69 to 70 (DI), and 91 to 93 (AYT). 132 to 133 (TD) contributes to the dTDP-beta-L-rhamnose binding site. 2 residues coordinate NADH: tyrosine 157 and lysine 161. Positions 157 and 161 each coordinate NADPH. Tyrosine 157 acts as the Proton donor/acceptor in catalysis. Tryptophan 182 contributes to the dTDP-beta-L-rhamnose binding site. The segment covering 264–276 (PERVRPCGSDRHP) has biased composition (basic and acidic residues). Positions 264 to 292 (PERVRPCGSDRHPRPAPRPSYTVLSSQRS) are disordered.

The protein belongs to the dTDP-4-dehydrorhamnose reductase family. It depends on Mg(2+) as a cofactor.

The enzyme catalyses dTDP-beta-L-rhamnose + NADP(+) = dTDP-4-dehydro-beta-L-rhamnose + NADPH + H(+). It participates in carbohydrate biosynthesis; dTDP-L-rhamnose biosynthesis. Its function is as follows. Involved in the biosynthesis of the dTDP-L-rhamnose which is a component of the critical linker, D-N-acetylglucosamine-L-rhamnose disaccharide, which connects the galactan region of arabinogalactan to peptidoglycan via a phosphodiester linkage. Catalyzes the reduction of dTDP-6-deoxy-L-lyxo-4-hexulose to yield dTDP-L-rhamnose. The polypeptide is dTDP-4-dehydrorhamnose reductase (Mycolicibacterium smegmatis (strain ATCC 700084 / mc(2)155) (Mycobacterium smegmatis)).